Consider the following 192-residue polypeptide: Fe/S biogenesis protein NfuA (192 aa).

Cys-149 and Cys-152 together coordinate [4Fe-4S] cluster.

This sequence belongs to the NfuA family. Homodimer. Requires [4Fe-4S] cluster as cofactor.

In terms of biological role, involved in iron-sulfur cluster biogenesis. Binds a 4Fe-4S cluster, can transfer this cluster to apoproteins, and thereby intervenes in the maturation of Fe/S proteins. Could also act as a scaffold/chaperone for damaged Fe/S proteins. In Shewanella loihica (strain ATCC BAA-1088 / PV-4), this protein is Fe/S biogenesis protein NfuA.